A 254-amino-acid chain; its full sequence is Proteasome subunit alpha (254 aa).

Residues 232 to 254 are disordered; it reads PEVDSSESSNEAEAGAEKGSGES.

Belongs to the peptidase T1A family. In terms of assembly, the 20S proteasome core is composed of 14 alpha and 14 beta subunits that assemble into four stacked heptameric rings, resulting in a barrel-shaped structure. The two inner rings, each composed of seven catalytic beta subunits, are sandwiched by two outer rings, each composed of seven alpha subunits. The catalytic chamber with the active sites is on the inside of the barrel. Has a gated structure, the ends of the cylinder being occluded by the N-termini of the alpha-subunits. Is capped by the proteasome-associated ATPase, ARC.

Its subcellular location is the cytoplasm. Its pathway is protein degradation; proteasomal Pup-dependent pathway. The formation of the proteasomal ATPase ARC-20S proteasome complex, likely via the docking of the C-termini of ARC into the intersubunit pockets in the alpha-rings, may trigger opening of the gate for substrate entry. Interconversion between the open-gate and close-gate conformations leads to a dynamic regulation of the 20S proteasome proteolysis activity. Functionally, component of the proteasome core, a large protease complex with broad specificity involved in protein degradation. The chain is Proteasome subunit alpha from Mycolicibacterium vanbaalenii (strain DSM 7251 / JCM 13017 / BCRC 16820 / KCTC 9966 / NRRL B-24157 / PYR-1) (Mycobacterium vanbaalenii).